We begin with the raw amino-acid sequence, 234 residues long: Transcriptional regulatory protein CitB (234 aa).

A Response regulatory domain is found at 5–121 (TTLIVEDEPM…RLQHTLERFA (117 aa)). Asp-56 carries the post-translational modification 4-aspartylphosphate. A DNA-binding region (H-T-H motif) is located at residues 181 to 200 (ADSLARILGSSKTTARRYLE).

In vitro CitB and the CitA kinase domain form a complex, formation of which is enhanced by ATP. Phosphorylated by CitA.

It is found in the cytoplasm. Its function is as follows. Member of the two-component regulatory system CitA/CitB essential for expression of citrate-specific fermentation genes. Phosphorylated CitB binds to two sites in the citS-citC intergenic region where it probably activates transcription of both genes. This chain is Transcriptional regulatory protein CitB (citB), found in Klebsiella pneumoniae.